A 158-amino-acid polypeptide reads, in one-letter code: NKG2-F type II integral membrane protein (158 aa).

The segment covering 1 to 12 (MNKQRGTYSEVS) has biased composition (polar residues). Positions 1 to 30 (MNKQRGTYSEVSLAQDPKRQQRKLKGNKSS) are disordered. Over 1-74 (MNKQRGTYSE…LPPPERLTAE (74 aa)) the chain is Cytoplasmic. A helical transmembrane segment spans residues 75 to 95 (VLGIICIVLMATVLKTIVLIP). At 96–158 (CIGVLEQNNF…VLQRTLICFL (63 aa)) the chain is on the extracellular side.

Can form disulfide-bonded heterodimer with CD94. Natural killer cells.

The protein resides in the membrane. May play a role as a receptor for the recognition of MHC class I HLA-E molecules by NK cells. In Pan troglodytes (Chimpanzee), this protein is NKG2-F type II integral membrane protein (KLRC4).